A 654-amino-acid polypeptide reads, in one-letter code: Threonine--tRNA ligase (654 aa).

The TGS domain maps to 1–63 (MAQISLTFPD…DADASIAIHT (63 aa)). Positions 247–544 (DHRKLGREMN…LIENFAGKLP (298 aa)) are catalytic. Positions 344, 395, and 521 each coordinate Zn(2+).

This sequence belongs to the class-II aminoacyl-tRNA synthetase family. As to quaternary structure, homodimer. Zn(2+) is required as a cofactor.

It is found in the cytoplasm. The enzyme catalyses tRNA(Thr) + L-threonine + ATP = L-threonyl-tRNA(Thr) + AMP + diphosphate + H(+). In terms of biological role, catalyzes the attachment of threonine to tRNA(Thr) in a two-step reaction: L-threonine is first activated by ATP to form Thr-AMP and then transferred to the acceptor end of tRNA(Thr). Also edits incorrectly charged L-seryl-tRNA(Thr). This Dinoroseobacter shibae (strain DSM 16493 / NCIMB 14021 / DFL 12) protein is Threonine--tRNA ligase.